Consider the following 68-residue polypeptide: Protein SlyX homolog (68 aa).

It belongs to the SlyX family.

The polypeptide is Protein SlyX homolog (Pseudomonas fluorescens (strain SBW25)).